The sequence spans 184 residues: Probable RNA 2'-phosphotransferase (184 aa).

This sequence belongs to the KptA/TPT1 family.

Removes the 2'-phosphate from RNA via an intermediate in which the phosphate is ADP-ribosylated by NAD followed by a presumed transesterification to release the RNA and generate ADP-ribose 1''-2''-cyclic phosphate (APPR&gt;P). May function as an ADP-ribosylase. The protein is Probable RNA 2'-phosphotransferase of Escherichia coli O139:H28 (strain E24377A / ETEC).